A 333-amino-acid polypeptide reads, in one-letter code: Geranylgeranyl pyrophosphate synthase olcC (333 aa).

Residues Lys61, Arg64, and His93 each contribute to the isopentenyl diphosphate site. Mg(2+) contacts are provided by Asp100 and Asp104. Arg109 is a dimethylallyl diphosphate binding site. Arg110 lines the isopentenyl diphosphate pocket. Dimethylallyl diphosphate contacts are provided by Lys187, Thr188, and Gln221. Asp224 lines the Mg(2+) pocket. Dimethylallyl diphosphate is bound by residues Asn228, Lys238, and Lys248.

The protein belongs to the FPP/GGPP synthase family. It depends on Mg(2+) as a cofactor.

It carries out the reaction isopentenyl diphosphate + dimethylallyl diphosphate = (2E)-geranyl diphosphate + diphosphate. The catalysed reaction is isopentenyl diphosphate + (2E)-geranyl diphosphate = (2E,6E)-farnesyl diphosphate + diphosphate. It catalyses the reaction isopentenyl diphosphate + (2E,6E)-farnesyl diphosphate = (2E,6E,10E)-geranylgeranyl diphosphate + diphosphate. Its pathway is secondary metabolite biosynthesis; terpenoid biosynthesis. Functionally, geranylgeranyl pyrophosphate synthase; part of the gene cluster that mediates the biosynthesis of 15-deoxyoxalicine B. The first step of the pathway is the synthesis of nicotinyl-CoA from nicotinic acid by the nicotinic acid-CoA ligase olcI. Nicotinyl-CoA is then a substrate of polyketide synthase olcA to produce 4-hydroxy-6-(3-pyridinyl)-2H-pyran-2-one (HPPO) which is further prenylated by the polyprenyl transferase olcH to yield geranylgeranyl-HPPO. Geranylgeranyl pyrophosphate is provided by the cluster-specific geranylgeranyl pyrophosphate synthase olcC. The FAD-dependent monooxygenase olcE catalyzes the epoxidation of geranylgeranyl-HPPO and the terpene cyclase olcD catalyzes the cyclization of the terpenoid component, resulting in the formation of the tricyclic terpene moiety seen in predecaturin E. The cytochrome P450 monooxygenase then catalyzes the allylic oxidation of predecaturin E, which is followed by spirocylization with concomitant loss of one molecule of water to form decaturin E. Decaturin E is the substrate of the cytochrome P450 monooxygenase olcJ which hydroxylates it at the C-29 position to form decaturin F. The short-chain dehydrogenase/reductase olcF may catalyze the oxidation of decaturin F to generate the 29-hydroxyl-27-one intermediate, and subsequent hemiacetal formation probably leads to the formation of decaturin C. The dioxygenase olcK may be a peroxisomal enzyme that catalyzes the hydroxylation of decaturin C into decaturin A once decaturin C is shuttled into the peroxisome by the MFS transporter olcL. Finally the cytochrome P450 monooxygenase olcB catalyzes the oxidative rearrangement to yield 15-deoxyoxalicine B. In the absence of olcJ, decaturin E may be shunted to a pathway in which it is oxidized to a ketone, possibly by olcF, to form decaturin D, which undergoes further allylic oxidation to yield decaturin G. Moreover, in the absence of oclK or oclL, oclB can convert decaturin C into 15-deoxyoxalicine A. This Penicillium canescens protein is Geranylgeranyl pyrophosphate synthase olcC.